The sequence spans 109 residues: Large ribosomal subunit protein uL22 (109 aa).

This sequence belongs to the universal ribosomal protein uL22 family. Part of the 50S ribosomal subunit.

Functionally, this protein binds specifically to 23S rRNA; its binding is stimulated by other ribosomal proteins, e.g. L4, L17, and L20. It is important during the early stages of 50S assembly. It makes multiple contacts with different domains of the 23S rRNA in the assembled 50S subunit and ribosome. The globular domain of the protein is located near the polypeptide exit tunnel on the outside of the subunit, while an extended beta-hairpin is found that lines the wall of the exit tunnel in the center of the 70S ribosome. This chain is Large ribosomal subunit protein uL22, found in Thiobacillus denitrificans (strain ATCC 25259 / T1).